A 381-amino-acid chain; its full sequence is MSDDEEPPLKKNKLPVEEPTLIPSLPEELILSILARVSRLSYRSLSLVCKRFHSLLTSGEIYRFRSLSGYTENCLYVCLRFSHTGRSHRWFMLREKNKSSGYVLAPIPISHSPSLHASSIVAVGSKIYKIGGVMDGSSVSILDCWSHRWLEAPSMQMERDRPSANLIDGKIYVTGGCHRGSYNPSKWMEVFDLKTETWEPVLCRSDRLTFESYHERTNNLLVDGKLYIFWADKGVVYNPKDDTWDSLEVPEMDMCLTLFYCCVIENVLYDFFYEELDIKWYDTKARTWRSLLNGMRELHKFVRHASVTLADYGGKMVMFWDKFVASGDGLGFHKTMMWCAMIALERSDSGEIWGKVEWFGPVLPNQIPLEYAFEYVGSVKV.

Residues 19 to 65 (PTLIPSLPEELILSILARVSRLSYRSLSLVCKRFHSLLTSGEIYRFR) enclose the F-box domain. Kelch repeat units follow at residues 126–169 (KIYK…LIDG), 171–218 (IYVT…ERTN), 220–266 (LLVD…VIEN), and 269–314 (YDFF…DYGG).

This is Putative F-box/kelch-repeat protein At1g60570 from Arabidopsis thaliana (Mouse-ear cress).